The primary structure comprises 489 residues: RNA polymerase II subunit 5-mediating protein homolog (489 aa).

Disordered regions lie at residues 141–188, 200–329, 396–415, and 434–489; these read NSDE…MDEE, EEKE…EEDE, ILKTNSSGNLMSTIPKSYNE, and FENQ…RQNK. Over residues 157–168 the composition is skewed to low complexity; it reads QKSTTTTTTTTT. Composition is skewed to basic and acidic residues over residues 169 to 188 and 215 to 224; these read SKDKPKTEEEKKKSKEMDEE and FNKKFNKKLD. Acidic residues-rich tracts occupy residues 227–265, 276–298, and 315–329; these read GSDEEYDDDNYNNNNDDDDDNDEDDDREYYQEEGFEDEK, EEDDHDDDDDYYDEGEEIVEYYD, and QGDDDNDDNDNEEDE. Residues 396 to 413 show a composition bias toward polar residues; sequence ILKTNSSGNLMSTIPKSY. The span at 480-489 shows a compositional bias: basic residues; the sequence is SRFKSSRQNK.

This sequence belongs to the RNA polymerase II subunit 5-mediating protein family.

The protein resides in the nucleus. This Dictyostelium discoideum (Social amoeba) protein is RNA polymerase II subunit 5-mediating protein homolog (rmp).